A 97-amino-acid polypeptide reads, in one-letter code: Large ribosomal subunit protein bL28 (97 aa).

Residues Met-1 to His-20 are disordered.

It belongs to the bacterial ribosomal protein bL28 family.

This is Large ribosomal subunit protein bL28 from Afipia carboxidovorans (strain ATCC 49405 / DSM 1227 / KCTC 32145 / OM5) (Oligotropha carboxidovorans).